Here is an 833-residue protein sequence, read N- to C-terminus: Urease (833 aa).

One can recognise a Urease domain in the interval 395–833 (GALDVHVHYI…LPLTKRYFVY (439 aa)). Residues His400 and His402 each coordinate Ni(2+). Urea contacts are provided by His402 and Ala433. Lys483 is a Ni(2+) binding site. Residue Lys483 is modified to N6-carboxylysine. Urea-binding residues include His485 and His512. Residues His512 and His538 each coordinate Ni(2+). His586 functions as the Proton donor in the catalytic mechanism. Asp626 contacts Ni(2+). Urea is bound at residue Ala629.

The protein in the C-terminal section; belongs to the metallo-dependent hydrolases superfamily. Urease alpha subunit family. In terms of assembly, homohexamer. Ni(2+) is required as a cofactor. In terms of processing, carboxylation allows a single lysine to coordinate two nickel ions.

It carries out the reaction urea + 2 H2O + H(+) = hydrogencarbonate + 2 NH4(+). Its pathway is nitrogen metabolism; urea degradation; CO(2) and NH(3) from urea (urease route): step 1/1. Its activity is regulated as follows. The urease accessory proteins URE4, URE6 and URE7 are required for urease activity, URE7 supplying nickel for the functional urease. Functionally, plays a nutritional role via nitrogen acquisition in the environment. Contributes to the central nervous system invasion by enhancing yeast sequestration within microcapillary beds (such as within the brain) during hematogenous spread, thereby facilitating blood-to-brain invasion by C.neoformans. Affects fitness within the mammalian phagosome, promoting non-lytic exocytosis while delaying intracellular replication and thus reducing phagolysosomal membrane damage, events that could facilitate cryptococcal dissemination when transported inside macrophages. Urease activity is also associated with the regulation of key intracellular metabolic pathways, including melanin biosynthesis, polyamine biosynthesis, as well as intracellular levels of proline and reactive oxygen species. The chain is Urease from Cryptococcus neoformans var. neoformans serotype D (strain B-3501A) (Filobasidiella neoformans).